The chain runs to 901 residues: Putative receptor protein kinase CRINKLY4 (901 aa).

Residues M1–G24 form the signal peptide. The Extracellular segment spans residues L25–R423. 7 consecutive repeat copies span residues V33–P68, F72–Q107, L125–E160, V162–G195, F203–P236, M253–P287, and M292–P330. Residues V33 to P330 form a 7 X 36 AA repeats region. Residues N151 and N179 are each glycosylated (N-linked (GlcNAc...) asparagine). Residue N282 is glycosylated (N-linked (GlcNAc...) asparagine). 3 cysteine pairs are disulfide-bonded: C338–C365, C368–C382, and C372–C390. A TNFR-Cys repeat occupies C357 to Q391. N-linked (GlcNAc...) asparagine glycosylation is present at N383. A helical membrane pass occupies residues I424–C444. The Cytoplasmic portion of the chain corresponds to L445 to F901. The region spanning F505–D712 is the Protein kinase domain. Residues V511–V519 and K533 contribute to the ATP site. D634 serves as the catalytic Proton acceptor. The tract at residues V845–G876 is disordered.

Belongs to the protein kinase superfamily. Ser/Thr protein kinase family. Homodimer.

The protein resides in the cell membrane. It is found in the endosome. Its subcellular location is the multivesicular body membrane. It catalyses the reaction L-seryl-[protein] + ATP = O-phospho-L-seryl-[protein] + ADP + H(+). It carries out the reaction L-threonyl-[protein] + ATP = O-phospho-L-threonyl-[protein] + ADP + H(+). In terms of biological role, putative receptor protein kinase. Could play a role in a differentiation signal. The CRINKLY4 (CR4) mutation affects leaf epidermis differentiation such that cell size and morphology are altered, and surface functions are compromised, allowing graft-like fusions between organs. This is Putative receptor protein kinase CRINKLY4 (CR4) from Zea mays (Maize).